We begin with the raw amino-acid sequence, 79 residues long: NAD(P)H-quinone oxidoreductase subunit L (79 aa).

2 consecutive transmembrane segments (helical) span residues 10–30 and 48–68; these read IIIA…IPAV and GFMY…SPFL.

This sequence belongs to the complex I NdhL subunit family. As to quaternary structure, NDH-1 can be composed of about 15 different subunits; different subcomplexes with different compositions have been identified which probably have different functions.

It is found in the cellular thylakoid membrane. It carries out the reaction a plastoquinone + NADH + (n+1) H(+)(in) = a plastoquinol + NAD(+) + n H(+)(out). The enzyme catalyses a plastoquinone + NADPH + (n+1) H(+)(in) = a plastoquinol + NADP(+) + n H(+)(out). Functionally, NDH-1 shuttles electrons from an unknown electron donor, via FMN and iron-sulfur (Fe-S) centers, to quinones in the respiratory and/or the photosynthetic chain. The immediate electron acceptor for the enzyme in this species is believed to be plastoquinone. Couples the redox reaction to proton translocation, and thus conserves the redox energy in a proton gradient. Cyanobacterial NDH-1 also plays a role in inorganic carbon-concentration. In Microcystis aeruginosa (strain NIES-843 / IAM M-2473), this protein is NAD(P)H-quinone oxidoreductase subunit L.